A 354-amino-acid polypeptide reads, in one-letter code: Trans-L-3-hydroxyproline dehydratase (354 aa).

Residue C104 is the Proton acceptor of the active site. Residues 105–106 (GH), D269, and 274–275 (GS) contribute to the substrate site.

The protein belongs to the proline racemase family. As to quaternary structure, homodimer.

The catalysed reaction is trans-3-hydroxy-L-proline = 1-pyrroline-2-carboxylate + H2O. Its function is as follows. Catalyzes the dehydration of trans-3-hydroxy-L-proline to delta-1-pyrroline-2-carboxylate (Pyr2C). In Pongo abelii (Sumatran orangutan), this protein is Trans-L-3-hydroxyproline dehydratase (L3HYPDH).